Consider the following 86-residue polypeptide: Probable oxaloacetate decarboxylase gamma chain 1 (86 aa).

A helical membrane pass occupies residues 11–33 (AATLMVTGMAVVFLFLTLLVYLV).

Belongs to the OadG family. As to quaternary structure, heterotrimer of an alpha, a beta and a gamma subunit. Na(+) is required as a cofactor.

Its subcellular location is the cell membrane. It carries out the reaction oxaloacetate + 2 Na(+)(in) + H(+) = pyruvate + 2 Na(+)(out) + CO2. Catalyzes the decarboxylation of oxaloacetate coupled to Na(+) translocation. The polypeptide is Probable oxaloacetate decarboxylase gamma chain 1 (oadG1) (Vibrio cholerae serotype O1 (strain ATCC 39315 / El Tor Inaba N16961)).